Here is a 342-residue protein sequence, read N- to C-terminus: Phosphate acyltransferase (342 aa).

This sequence belongs to the PlsX family. In terms of assembly, homodimer. Probably interacts with PlsY.

Its subcellular location is the cytoplasm. It catalyses the reaction a fatty acyl-[ACP] + phosphate = an acyl phosphate + holo-[ACP]. The protein operates within lipid metabolism; phospholipid metabolism. Functionally, catalyzes the reversible formation of acyl-phosphate (acyl-PO(4)) from acyl-[acyl-carrier-protein] (acyl-ACP). This enzyme utilizes acyl-ACP as fatty acyl donor, but not acyl-CoA. This chain is Phosphate acyltransferase, found in Shewanella baltica (strain OS155 / ATCC BAA-1091).